The sequence spans 402 residues: 1-deoxy-D-xylulose 5-phosphate reductoisomerase (402 aa).

Residues Thr-10, Gly-11, Ser-12, Ile-13, Asn-38, and Asn-124 each coordinate NADPH. Lys-125 serves as a coordination point for 1-deoxy-D-xylulose 5-phosphate. NADPH is bound at residue Glu-126. Asp-150 lines the Mn(2+) pocket. 1-deoxy-D-xylulose 5-phosphate contacts are provided by Ser-151, Glu-152, Ser-186, and His-209. Mn(2+) is bound at residue Glu-152. Residue Gly-215 coordinates NADPH. Residues Ser-222, Asn-227, Lys-228, and Glu-231 each coordinate 1-deoxy-D-xylulose 5-phosphate. Glu-231 lines the Mn(2+) pocket.

This sequence belongs to the DXR family. Requires Mg(2+) as cofactor. Mn(2+) serves as cofactor.

It catalyses the reaction 2-C-methyl-D-erythritol 4-phosphate + NADP(+) = 1-deoxy-D-xylulose 5-phosphate + NADPH + H(+). The protein operates within isoprenoid biosynthesis; isopentenyl diphosphate biosynthesis via DXP pathway; isopentenyl diphosphate from 1-deoxy-D-xylulose 5-phosphate: step 1/6. Its function is as follows. Catalyzes the NADPH-dependent rearrangement and reduction of 1-deoxy-D-xylulose-5-phosphate (DXP) to 2-C-methyl-D-erythritol 4-phosphate (MEP). The protein is 1-deoxy-D-xylulose 5-phosphate reductoisomerase of Vibrio vulnificus (strain CMCP6).